A 122-amino-acid polypeptide reads, in one-letter code: Small ribosomal subunit protein uS13 (122 aa).

A disordered region spans residues 93–122; sequence RRSLPVRGQRTHTNARTRKGPAKPIAGKKK.

This sequence belongs to the universal ribosomal protein uS13 family. Part of the 30S ribosomal subunit. Forms a loose heterodimer with protein S19. Forms two bridges to the 50S subunit in the 70S ribosome.

In terms of biological role, located at the top of the head of the 30S subunit, it contacts several helices of the 16S rRNA. In the 70S ribosome it contacts the 23S rRNA (bridge B1a) and protein L5 of the 50S subunit (bridge B1b), connecting the 2 subunits; these bridges are implicated in subunit movement. Contacts the tRNAs in the A and P-sites. The chain is Small ribosomal subunit protein uS13 from Chelativorans sp. (strain BNC1).